Consider the following 650-residue polypeptide: Acetyl-coenzyme A synthetase (650 aa).

CoA-binding positions include 191-194, Thr311, and Asn335; that span reads RGGR. Residues 387–389, 411–416, Asp500, and Arg515 contribute to the ATP site; these read GEP and DTWWQT. Residue Ser523 participates in CoA binding. An ATP-binding site is contributed by Arg526. Mg(2+) is bound by residues Val537, His539, and Val542. A CoA-binding site is contributed by Arg584. Lys609 is subject to N6-acetyllysine.

The protein belongs to the ATP-dependent AMP-binding enzyme family. Mg(2+) serves as cofactor. Acetylated. Deacetylation by the SIR2-homolog deacetylase activates the enzyme.

It catalyses the reaction acetate + ATP + CoA = acetyl-CoA + AMP + diphosphate. Functionally, catalyzes the conversion of acetate into acetyl-CoA (AcCoA), an essential intermediate at the junction of anabolic and catabolic pathways. AcsA undergoes a two-step reaction. In the first half reaction, AcsA combines acetate with ATP to form acetyl-adenylate (AcAMP) intermediate. In the second half reaction, it can then transfer the acetyl group from AcAMP to the sulfhydryl group of CoA, forming the product AcCoA. This is Acetyl-coenzyme A synthetase from Shewanella amazonensis (strain ATCC BAA-1098 / SB2B).